The primary structure comprises 244 residues: Anti-H(O) lectin 1 (244 aa).

2 N-linked (GlcNAc...) asparagine glycosylation sites follow: asparagine 113 and asparagine 117. Residues glutamate 127 and aspartate 129 each coordinate Mn(2+). Ca(2+)-binding residues include aspartate 129, tyrosine 131, asparagine 137, and aspartate 142. 2 residues coordinate Mn(2+): aspartate 142 and histidine 145.

It belongs to the leguminous lectin family. In terms of assembly, homotetramer.

In terms of biological role, di-N-acetylchitobiose-binding anti-H(O) lectin. In Cytisophyllum sessilifolium (Sessile-leaved cytisus), this protein is Anti-H(O) lectin 1.